We begin with the raw amino-acid sequence, 98 residues long: Protein translation factor SUI1 homolog (98 aa).

Belongs to the SUI1 family.

The polypeptide is Protein translation factor SUI1 homolog (Thermococcus gammatolerans (strain DSM 15229 / JCM 11827 / EJ3)).